The following is a 228-amino-acid chain: Ribonuclease 3 (228 aa).

Positions 5–127 constitute an RNase III domain; sequence LMALQARLQH…VIGAVYLDAG (123 aa). E40 lines the Mg(2+) pocket. D44 is an active-site residue. Mg(2+)-binding residues include D113 and E116. Residue E116 is part of the active site. Positions 154–224 constitute a DRBM domain; sequence DPKTELQEWL…AAAMLQTLKA (71 aa).

The protein belongs to the ribonuclease III family. In terms of assembly, homodimer. Mg(2+) is required as a cofactor.

Its subcellular location is the cytoplasm. The catalysed reaction is Endonucleolytic cleavage to 5'-phosphomonoester.. Functionally, digests double-stranded RNA. Involved in the processing of primary rRNA transcript to yield the immediate precursors to the large and small rRNAs (23S and 16S). Processes some mRNAs, and tRNAs when they are encoded in the rRNA operon. Processes pre-crRNA and tracrRNA of type II CRISPR loci if present in the organism. The chain is Ribonuclease 3 from Albidiferax ferrireducens (strain ATCC BAA-621 / DSM 15236 / T118) (Rhodoferax ferrireducens).